The following is a 634-amino-acid chain: tRNA uridine 5-carboxymethylaminomethyl modification enzyme MnmG (634 aa).

13–18 (GAGHAG) provides a ligand contact to FAD. NAD(+) is bound at residue 273 to 287 (GPRYCPSIEDKIIKF).

This sequence belongs to the MnmG family. As to quaternary structure, homodimer. Heterotetramer of two MnmE and two MnmG subunits. FAD serves as cofactor.

It is found in the cytoplasm. NAD-binding protein involved in the addition of a carboxymethylaminomethyl (cmnm) group at the wobble position (U34) of certain tRNAs, forming tRNA-cmnm(5)s(2)U34. The polypeptide is tRNA uridine 5-carboxymethylaminomethyl modification enzyme MnmG (Buchnera aphidicola subsp. Cinara cedri (strain Cc)).